A 49-amino-acid chain; its full sequence is Large ribosomal subunit protein bL33B (49 aa).

This sequence belongs to the bacterial ribosomal protein bL33 family.

This chain is Large ribosomal subunit protein bL33B, found in Exiguobacterium sibiricum (strain DSM 17290 / CCUG 55495 / CIP 109462 / JCM 13490 / 255-15).